The sequence spans 152 residues: Transcriptional regulator MraZ (152 aa).

2 SpoVT-AbrB domains span residues 5–52 and 81–124; these read VTSI…PLHE and ATEC…QDKQ.

It belongs to the MraZ family. As to quaternary structure, forms oligomers.

It is found in the cytoplasm. Its subcellular location is the nucleoid. This Actinobacillus pleuropneumoniae serotype 5b (strain L20) protein is Transcriptional regulator MraZ.